The chain runs to 496 residues: Chromosomal replication initiator protein DnaA (496 aa).

A domain I, interacts with DnaA modulators region spans residues 1 to 76; it reads MKMDSAVSEE…TELWQEENPQ (76 aa). Residues 76-150 form a domain II region; sequence QILKVEVVVR…AAATDAVLGS (75 aa). The interval 151-373 is domain III, AAA+ region; the sequence is PLDPRYTFDT…GAFNQLLFRQ (223 aa). ATP-binding residues include G197, G199, K200, and T201. The tract at residues 374-496 is domain IV, binds dsDNA; it reads SFEPNISIDR…LKRLINDQAA (123 aa).

Belongs to the DnaA family. In terms of assembly, oligomerizes as a right-handed, spiral filament on DNA at oriC.

The protein resides in the cytoplasm. In terms of biological role, plays an essential role in the initiation and regulation of chromosomal replication. ATP-DnaA binds to the origin of replication (oriC) to initiate formation of the DNA replication initiation complex once per cell cycle. Binds the DnaA box (a 9 base pair repeat at the origin) and separates the double-stranded (ds)DNA. Forms a right-handed helical filament on oriC DNA; dsDNA binds to the exterior of the filament while single-stranded (ss)DNA is stabiized in the filament's interior. The ATP-DnaA-oriC complex binds and stabilizes one strand of the AT-rich DNA unwinding element (DUE), permitting loading of DNA polymerase. After initiation quickly degrades to an ADP-DnaA complex that is not apt for DNA replication. Binds acidic phospholipids. The sequence is that of Chromosomal replication initiator protein DnaA from Brucella suis biovar 1 (strain 1330).